The following is a 445-amino-acid chain: Protein kinase C and casein kinase substrate in neurons protein 1 (445 aa).

The region spanning 12–282 is the F-BAR domain; the sequence is DETTDSFWEV…TIVSASAQED (271 aa). Coiled-coil stretches lie at residues 146 to 167 and 183 to 219; these read AKKL…KEEK and TTDQ…NKCT. The disordered stretch occupies residues 327–390; sequence LTQVTHGAEH…PFEEDSKGVR (64 aa). Polar residues-rich tracts occupy residues 338–358 and 368–379; these read TPQT…QYSA and TAAQSASETNGG. An SH3 domain is found at 386-445; that stretch reads SKGVRVRALYDYEGQEQDELTFKAGDELTKLEDEDEQGWCKGRLDSGQLGLYPANYVEPV.

In terms of assembly, interacts with cobl.

It localises to the cytoplasm. It is found in the cytosol. The protein localises to the cell membrane. The protein resides in the cell projection. Its subcellular location is the synapse. It localises to the synaptosome. It is found in the cytoplasmic vesicle membrane. The protein localises to the ruffle membrane. The protein resides in the membrane. Its function is as follows. Binds to membranes via its F-BAR domain and mediates membrane tubulation. Plays a role in cellular transport processes by recruiting dynamins to membranes. Plays a role in the reorganization of the actin cytoskeleton and in neuron morphogenesis via its interaction with cobl, and by recruiting cobl to the cell cortex. Plays a role in the regulation of neurite formation, neurite branching and the regulation of neurite length. Required for normal synaptic vesicle endocytosis; this process retrieves previously released neurotransmitters to accommodate multiple cycles of neurotransmission. Required for normal excitatory and inhibitory synaptic transmission. Required for normal embryonic development, including normal development of laterality, normal body size and shape, as well as normal brain and heart development. Required for normal development of stereocilia and kinocilia in sensory hair cells of neuromasts in the posterior lateral line organ, and thus also for balance keeping and normal swimming behavior. The polypeptide is Protein kinase C and casein kinase substrate in neurons protein 1 (pacsin1b) (Danio rerio (Zebrafish)).